The chain runs to 1683 residues: MDVNSRLSVQSNVESPLMPEDSEPQQITSSAAGSLAGSITACKKVLRSNSLLESTDYWLQNQRTPCQIGFVEDESENCASVCFVNLDVNKDGCSTENLQQKLVNVSPDLPKLINSMNVQKPKENEIVLLSGLASGNRQADFDVSQCPWLPDICLVQCARGNRPNSTNCIIFEINKFLIGLEVVQERQLHLETSVLKLEDDTNCSLSSIEEDFLTASEHLEEEIEVEDCKSGLETINVSANVLESKRPKEATQEGWDYHKEILHCALGEKHIRKHRMPSMKTERSKENTAENTALQSLNPSARPSRLKSEVAGSKQPATNYSYPENIRGEIETSQMLFIPRDAYLSMVSSCGVLTEQGSNHRDHDATPNSLPPVQNGEATAGEYATNLAESVMQDAFIRLSQSQPTLPQESAVSFSVGSALLPSGCCTKDMVVPRSWNELPKIVIVQSPEGSDTAPEPSVSSWPDLEVSVETPGIFSEESSSRPTQSALEVALACAATVIGTTSSPQATERFTMEQESLVSTYTQRGNGIQQTPVPRVFMGPSTTEYSFPSALCGMTQVASAVAVCGLGEREEVTYSVAPSDLLPTPGASEERSSIGSLVTEESTELGKEAIAEALLREATLVLARPNAYSSVGELLESVNRRIIETTSKTQMLCTENVRRNELAHTLSNVILKHSIDELHQKNIMAHPTEERHPGGTLNTLMESVNQLLHNVMCFTFRKMNHIVTLGEHPSFDKAAGHAWVKASACSSSHPSSNAHGTGLVIRDLVEDASPKPDKGGARPELVNNPRLQSEFSCSHRMLDSTARTFPKEMYPKGIVGEDTRNPLHTLSYDSSEQRTSTDIGKLTTVGEVRSTFQESEDSIVPKAQEKHTCATTLNNEAQINLSLLGDDLVVPDQSTLEAKQSEVYGITNFAEELAETVVSMATEIAAICLDNSHGKQPWFCAWKRGNEFLMTPNASCRSLKRKKENSGTGSTVRKHKPPRLSEIKRKADEHPELKEKLMNRVMDESMNLEDIPDSVSTFANEVAAKIMNLTEFSTVDGVWQTQSCSRNRLLGGDRWNRLKASSCESIPEEDSEARVFVNSLGLMSTLSQPVSRASSVSKQSSCESITDEFSRFMVKQMENEGRGFELLLDYYAGKNASSILNSAIQQACQKNDHLNVRPSCPSKQSSTESITEEFYKYMLRDIAKENKDGALSRRSSHDWSTGLLSPSARSPLCYRQSSMPDSRSPCSRLTVNAPIKANSLDGFAQNCPQDSINVQPVSRASSSGLCKSDSCLYRRSGTDQITNMLIHETWASSIEALMRKNKIIADDGEAANASPGPVSGGSPSQVEKCANRLVTGTGHKGPALLVQESVDYQRKDAVTEGNCSPVSSPSKMAPVKKPSGFDPTRETSACHNAVALKSPRRSLCSREVPLIQIETDQKEECVGESETLLPQSGSLEEAEGPQPEETIPDVARSEDTALSACQSSQDSLETREELEVDVLKEDITLDESRNPPSSSEESTGSWSQLANEEDNPDDTSSFLQLSERSMSNGNTSGTSSLGIMDLDIYQESIPSSPMINELVEEKEILKEQSESVKERASGLPGRAASPQRSLLVINFDLEPECPDAELRATLQWIAASELGIPTIYFKKSQESRIEKFLDVVKLVHQKSWKVGDIFHAVVQYCKMHAEQKEGTPSLFDWLLELG.

Polar residues-rich tracts occupy residues 1–14 and 289–301; these read MDVN…SNVE and AENT…NPSA. Disordered stretches follow at residues 1-30, 275-320, and 582-601; these read MDVN…ITSS, RMPS…ATNY, and LLPT…LVTE. A PKA-RII subunit binding domain region spans residues 910–927; it reads FAEELAETVVSMATEIAA. Residues 960–983 are disordered; it reads LKRKKENSGTGSTVRKHKPPRLSE. Ser1006, Ser1066, Ser1088, Ser1101, Ser1102, Ser1105, Ser1240, and Ser1269 each carry phosphoserine. 2 disordered regions span residues 1359–1387 and 1415–1518; these read VTEG…PTRE and ETDQ…DTSS. Polar residues predominate over residues 1362-1371; sequence GNCSPVSSPS. The span at 1469–1490 shows a compositional bias: basic and acidic residues; sequence LETREELEVDVLKEDITLDESR. The span at 1492-1504 shows a compositional bias: low complexity; sequence PPSSSEESTGSWS.

This sequence belongs to the AKAP110 family. As to quaternary structure, interacts (via the PKA-RII subunit binding domain) with the RI subunit of PKA. Interacts with SPHK1; the interaction greatly reduces SPHK1 activity. In terms of tissue distribution, abundant in heart ventricle (at protein level).

The protein resides in the cytoplasm. In terms of biological role, anchoring protein that binds preferentially to the type I regulatory subunit of c-AMP-dependent protein kinase (PKA type I) and targets it to distinct subcellular compartments. May act as a converging factor linking cAMP and sphingosine signaling pathways. Plays a regulatory role in the modulation of SPHK1. The chain is A-kinase anchor protein SPHKAP (Sphkap) from Rattus norvegicus (Rat).